We begin with the raw amino-acid sequence, 367 residues long: MPRFLPEPPHRHGNPATTAVVLVNLGTPDAPTAPALKRYLKEFLSDPRVVEIPKPVWWLILNGIILNIRPKKSAAKYASVWMPEGSPLRVHTERQAKLLKGLLGQRGHHLTVTSAMRYGSPSIPEVLAHLKAEGAKRILLVPMYPQYAASTTATVVDEAANWLTKIRNQPEMRFVRNFHDHEGYLAALEKSVRQHWQTNGSLGDNDRLLISFHGLPKRSLDLGDPYFCECHKTGRLLAERLNLKPEQFQICFQSRFGKAEWLQPYTAPTLHEWGSKGVRRVDVICPGFVADCLETLEEIAQEGRDDFLKAGGKEYHYIPALNEDDAWIKALADIAEQHLGGWSTKTAFDPHALETSAREAFKFGARA.

Residues H213 and E294 each coordinate Fe cation.

It belongs to the ferrochelatase family.

The protein localises to the cytoplasm. It carries out the reaction heme b + 2 H(+) = protoporphyrin IX + Fe(2+). Its pathway is porphyrin-containing compound metabolism; protoheme biosynthesis; protoheme from protoporphyrin-IX: step 1/1. In terms of biological role, catalyzes the ferrous insertion into protoporphyrin IX. The chain is Ferrochelatase from Dechloromonas aromatica (strain RCB).